The sequence spans 1129 residues: Egg-laying defective protein 27 (1129 aa).

A compositionally biased stretch (polar residues) spans 1 to 11 (MSRFDSQCSSE). Residues 1 to 43 (MSRFDSQCSSEDVNKEDECVPSSSEDSQDGVSSPMENDDEPEF) are disordered. Residues 22 to 33 (SSSEDSQDGVSS) are compositionally biased toward low complexity. The region spanning 87–223 (TLYRLRDSVF…QDSTKLASTH (137 aa)) is the BAH domain. In terms of domain architecture, ELM2 spans 224–327 (YAIRVGTSFQ…DALSELNAND (104 aa)). An SANT domain is found at 332–384 (TDVDNMTQDDAKKFAKGIKQLGKNFSRIHRELLPHHSREQLVSYYYLWKKTPE). The interval 388–434 (PKQAARRVNPTSIKRPTKEKVKASRPTSTEYLDFDSASESDVENNGP) is disordered. Residues 419–429 (LDFDSASESDV) show a composition bias toward acidic residues. Residues 439 to 485 (CHHCYGAESKDWHHANGLLLCTDCRLHYKKYGQLRQIANRPSQVPAC) form a GATA-type; atypical zinc finger. 5 disordered regions span residues 488–636 (KRSN…DPMP), 693–717 (RDET…SPED), 790–814 (QQNQ…QQAQ), 899–950 (MIAE…HAAA), and 982–1040 (MAAQ…REHA). 2 stretches are compositionally biased toward polar residues: residues 525–545 (PSTV…TKKL) and 561–573 (VINN…SSEE). Acidic residues-rich tracts occupy residues 613-634 (SYDD…DDDP) and 705-717 (KDDE…SPED). Residues 899-914 (MIAEQQQQQRHAAAQQ) are compositionally biased toward low complexity. Over residues 915–932 (LREREQREQRERERERQH) the composition is skewed to basic and acidic residues. Composition is skewed to low complexity over residues 933–950 (QQQA…HAAA) and 983–999 (AAQQ…AQAQ). Positions 1000 to 1040 (RDQERERREREAREREAAREREREQAAREAAARDQAAREHA) are enriched in basic and acidic residues.

Interacts with ceh-6, sem-4 and sox-2. Interacts with wdr-5.1. Expression detected in anterior intestine and head region.

The protein localises to the nucleus. Transcription factor which promotes stress survival and delays aging. Required for cell cycle progression and development of the mesodermal and endodermal embryonic lineages. Required for normal T-cell polarity, for correct migration of QL neuroblast descendants and other cells, for embryonic patterning and for the embryonic expression of hlh-8. Also required for the transdifferentiation of the Y rectal epithelial cell to the PDA motor neuron during larval development. The sequence is that of Egg-laying defective protein 27 from Caenorhabditis elegans.